The chain runs to 479 residues: mRNA export factor ICP27 homolog (479 aa).

Over residues 1 to 15 (MVPSQRLSRTSSISS) the composition is skewed to low complexity. Disordered regions lie at residues 1–78 (MVPS…SSVV) and 92–210 (KWDL…NKPW). Residues 35 to 44 (TDCDMDPMEG) show a composition bias toward acidic residues. Residues 132-142 (EVHGCTDESYG) are compositionally biased toward basic and acidic residues. Residues Cys-354, His-445, Cys-449, and Cys-454 each coordinate Zn(2+). A CHC2-type zinc finger spans residues 354-454 (CFLPNTRDYN…HTRDCRSASC (101 aa)).

This sequence belongs to the HHV-1 ICP27 protein family. As to quaternary structure, interacts with host XPO1 and with the XPO1 export pathway components small GTPase RAN and nucleoporin NUP214. Interacts with host SPEN, OTT1 and OTT3. Interacts with host SRSF1, SRSF3, SRSF7 and SRPK1. Interacts with host DHX9; this interaction may have an inhibitory effect on virion production. Interacts (via N-terminus) with host NXF1; this interaction plays a role in mRNA export. Phosphorylated by cellular protein kinase CK2.

It localises to the host nucleus. The protein localises to the host cytoplasm. In terms of biological role, promotes the nuclear export of a subset of early and late viral mRNAs by interacting with mRNAs and cellular export proteins. Additionally may prevent the establishment of cellular antiviral state, by acting as an alternative splicing factor for cellular RNAs such as STAT1, resulting in a STAT1 mRNA incapable of producing the STAT1alpha isoform. The polypeptide is mRNA export factor ICP27 homolog (Homo sapiens (Human)).